Here is a 252-residue protein sequence, read N- to C-terminus: 3-dehydroquinate dehydratase (252 aa).

3-dehydroquinate contacts are provided by residues serine 21, glutamate 46–arginine 48, and arginine 82. The Proton donor/acceptor role is filled by histidine 143. The active-site Schiff-base intermediate with substrate is the lysine 170. Residues arginine 213, serine 232, and glutamine 236 each contribute to the 3-dehydroquinate site.

This sequence belongs to the type-I 3-dehydroquinase family. As to quaternary structure, homodimer.

It carries out the reaction 3-dehydroquinate = 3-dehydroshikimate + H2O. It participates in metabolic intermediate biosynthesis; chorismate biosynthesis; chorismate from D-erythrose 4-phosphate and phosphoenolpyruvate: step 3/7. Involved in the third step of the chorismate pathway, which leads to the biosynthesis of aromatic amino acids. Catalyzes the cis-dehydration of 3-dehydroquinate (DHQ) and introduces the first double bond of the aromatic ring to yield 3-dehydroshikimate. This Shigella sonnei (strain Ss046) protein is 3-dehydroquinate dehydratase.